The chain runs to 243 residues: MISLLQMKFRALLLLLSKVWTCICFMFNRQVRAFIQYQPVKYELFPLSPVSRHRLSLVQRKTLVLDLDETLIHSHHNAMPRNTVKPGTPHDFTVKVTIDRNPVRFFVHKRPHVDYFLDVVSQWYDLVVFTASMEIYGAAVADKLDNGRNILRRRYYRQHCTPDYGSYTKDLSAICSDLNRIFIIDNSPGAYRCFPNNAIPIKSWFSDPMDTALLSLLPMLDALRFTNDVRSVLSRNLHLHRLW.

A helical membrane pass occupies residues 11–27 (ALLLLLSKVWTCICFMF). The FCP1 homology domain maps to 56–223 (SLVQRKTLVL…LSLLPMLDAL (168 aa)).

Belongs to the dullard family.

It localises to the membrane. It carries out the reaction O-phospho-L-seryl-[protein] + H2O = L-seryl-[protein] + phosphate. The catalysed reaction is O-phospho-L-threonyl-[protein] + H2O = L-threonyl-[protein] + phosphate. Its function is as follows. Serine/threonine protein phosphatase that may dephosphorylate and activate lipin-like phosphatases. Lipins are phosphatidate phosphatases that catalyze the conversion of phosphatidic acid to diacylglycerol and control the metabolism of fatty acids at different levels. May indirectly modulate the lipid composition of nuclear and/or endoplasmic reticulum membranes and be required for proper nuclear membrane morphology and/or dynamics. May also indirectly regulate the production of lipid droplets and triacylglycerol. The polypeptide is CTD nuclear envelope phosphatase 1 homolog (Dd) (Drosophila melanogaster (Fruit fly)).